Reading from the N-terminus, the 506-residue chain is bZIP transcription factor TGA10 (506 aa).

2 disordered regions span residues 22 to 50 and 113 to 218; these read VSYM…HQHH and PSSI…KTLR. 4 stretches are compositionally biased toward polar residues: residues 25 to 45, 113 to 124, 142 to 152, and 160 to 180; these read MDSS…SFGG, PSSIQEQRQNSG, PSTTNKMNTGL, and SKRS…NDAP. Residues 207-216 show a composition bias toward basic and acidic residues; sequence DAPKTPDPKT. The bZIP domain maps to 213-257; sequence DPKTLRRLAQNREAARKSRLRKKAYVQQLESSRIRLTQLEQELQR. The interval 215–235 is basic motif; sequence KTLRRLAQNREAARKSRLRKK. A Nuclear localization signal motif is present at residues 217 to 224; sequence LRRLAQNR. The tract at residues 241–255 is leucine-zipper; that stretch reads LESSRIRLTQLEQEL. The DOG1 domain maps to 288 to 502; the sequence is AAVFDMEYAR…RALSSLWHAR (215 aa).

This sequence belongs to the bZIP family. Binds DNA as a dimer. Interacts with TGA2.2. In terms of tissue distribution, specifically expressed in roots.

Its subcellular location is the nucleus. Transcription activator that binds to as1-like elements (5'-TGACGTAAgggaTGACGCA-3') in promoters of target genes. Regulates transcription in response to plant signaling molecules salicylic acid (SA), methyl jasmonate (MJ) and auxin (2,4D) only in leaves. Prevents lateral branching and may repress defense signaling. This is bZIP transcription factor TGA10 from Nicotiana tabacum (Common tobacco).